Consider the following 338-residue polypeptide: Large ribosomal subunit protein uL10 (338 aa).

The tract at residues P297–G338 is disordered. Positions S298 to T308 are enriched in low complexity. Positions A309 to S325 are enriched in basic and acidic residues.

Belongs to the universal ribosomal protein uL10 family. In terms of assembly, part of the 50S ribosomal subunit. Forms part of the ribosomal stalk which helps the ribosome interact with GTP-bound translation factors. Forms a heptameric L10(L12)2(L12)2(L12)2 complex, where L10 forms an elongated spine to which the L12 dimers bind in a sequential fashion.

Forms part of the ribosomal stalk, playing a central role in the interaction of the ribosome with GTP-bound translation factors. The polypeptide is Large ribosomal subunit protein uL10 (Saccharolobus islandicus (strain Y.N.15.51 / Yellowstone #2) (Sulfolobus islandicus)).